The sequence spans 596 residues: Transketolase-like protein 1 (596 aa).

A substrate-binding site is contributed by His46. Thiamine diphosphate contacts are provided by residues Ser49 and 94-96 (GWL). Residue Asp126 participates in Mg(2+) binding. Thiamine diphosphate contacts are provided by Gly127 and Asn156. Residues Asn156 and Leu158 each coordinate Mg(2+). Residues Lys218 and His232 each coordinate thiamine diphosphate. The substrate site is built by His232, Arg292, and Ser319. Residues Glu340 and Phe366 each coordinate thiamine diphosphate. Residue Glu340 is the Proton donor of the active site. Substrate-binding residues include His390 and Asp398. Residue Gln402 participates in thiamine diphosphate binding. Residue Arg448 participates in substrate binding.

The protein belongs to the transketolase family. As to quaternary structure, homodimer. The cofactor is Mg(2+). Ca(2+) serves as cofactor. It depends on Mn(2+) as a cofactor. Requires Co(2+) as cofactor. Thiamine diphosphate is required as a cofactor.

The protein resides in the cytoplasm. It carries out the reaction D-sedoheptulose 7-phosphate + D-glyceraldehyde 3-phosphate = aldehydo-D-ribose 5-phosphate + D-xylulose 5-phosphate. Catalyzes the transfer of a two-carbon ketol group from a ketose donor to an aldose acceptor, via a covalent intermediate with the cofactor thiamine pyrophosphate. The polypeptide is Transketolase-like protein 1 (TKTL1) (Macaca fascicularis (Crab-eating macaque)).